Consider the following 283-residue polypeptide: NAD kinase (283 aa).

Residue Asp66 is the Proton acceptor of the active site. Residues 66–67 (DG), Arg71, 137–138 (ND), His165, Asp167, and 178–183 (TGYSMS) each bind NAD(+).

Belongs to the NAD kinase family. It depends on a divalent metal cation as a cofactor.

Its subcellular location is the cytoplasm. The enzyme catalyses NAD(+) + ATP = ADP + NADP(+) + H(+). In terms of biological role, involved in the regulation of the intracellular balance of NAD and NADP, and is a key enzyme in the biosynthesis of NADP. Catalyzes specifically the phosphorylation on 2'-hydroxyl of the adenosine moiety of NAD to yield NADP. This Agathobacter rectalis (strain ATCC 33656 / DSM 3377 / JCM 17463 / KCTC 5835 / VPI 0990) (Eubacterium rectale) protein is NAD kinase.